Consider the following 428-residue polypeptide: 4-hydroxy-3-methylbut-2-en-1-yl diphosphate synthase (flavodoxin) (428 aa).

[4Fe-4S] cluster is bound by residues Cys-315, Cys-318, Cys-361, and Glu-368.

Belongs to the IspG family. The cofactor is [4Fe-4S] cluster.

The enzyme catalyses (2E)-4-hydroxy-3-methylbut-2-enyl diphosphate + oxidized [flavodoxin] + H2O + 2 H(+) = 2-C-methyl-D-erythritol 2,4-cyclic diphosphate + reduced [flavodoxin]. Its pathway is isoprenoid biosynthesis; isopentenyl diphosphate biosynthesis via DXP pathway; isopentenyl diphosphate from 1-deoxy-D-xylulose 5-phosphate: step 5/6. Converts 2C-methyl-D-erythritol 2,4-cyclodiphosphate (ME-2,4cPP) into 1-hydroxy-2-methyl-2-(E)-butenyl 4-diphosphate. The chain is 4-hydroxy-3-methylbut-2-en-1-yl diphosphate synthase (flavodoxin) from Ralstonia pickettii (strain 12J).